The primary structure comprises 301 residues: Ubiquitin thioesterase OTU1 (301 aa).

Residues 4–80 are UBX-like; that stretch reads KVTGAGINQV…TIESSDSNES (77 aa). The region spanning 109–229 is the OTU domain; that stretch reads LSVHPVLDDN…GIHYDSLTMN (121 aa). Positions 114–120 are cys-loop; that stretch reads VLDDNSC. Aspartate 117 is an active-site residue. Cysteine 120 serves as the catalytic Nucleophile. Lysine 160 participates in a covalent cross-link: Glycyl lysine isopeptide (Lys-Gly) (interchain with G-Cter in ubiquitin). The variable-loop stretch occupies residues 169-179; the sequence is ILKMESWGGAI. The segment at 218-222 is his-loop; it reads FNGIH. Isoleucine 221 lines the substrate pocket. Histidine 222 is an active-site residue. The tract at residues 243–248 is S2 site; sequence DDVLTA. Residues 270-294 form a C2H2-type zinc finger; it reads IKCNTCQMTFVGEREVARHAESTGH. Residue histidine 294 is part of the active site.

In terms of assembly, forms a complex composed of CDC48, NPL4, UFD1, DOA1, SHP1 and deubiquitinase OTU1; within the complex interacts with CDC48 and DOA1/UFD3.

Its subcellular location is the cytoplasm. The protein resides in the nucleus. The catalysed reaction is Thiol-dependent hydrolysis of ester, thioester, amide, peptide and isopeptide bonds formed by the C-terminal Gly of ubiquitin (a 76-residue protein attached to proteins as an intracellular targeting signal).. Its function is as follows. Hydrolase that can remove conjugated ubiquitin from proteins and may therefore play an important regulatory role at the level of protein turnover by preventing degradation. Participates in the regulation of the ubiquitin conjugation pathway involving CDC48 by hindering multiubiquitination of substrates at the CDC48 chaperone. May be indirectly involved in PIS1 gene expression. This Saccharomyces cerevisiae (strain ATCC 204508 / S288c) (Baker's yeast) protein is Ubiquitin thioesterase OTU1 (OTU1).